Here is a 295-residue protein sequence, read N- to C-terminus: MSKIVGSDRVKRGMAEMQKGGVIMDVVNAEQAKIAEEAGAVAVMALERVPSDIRAAGGVARSANPKIVEEVMNAVSIPVMAKARIGHITEARVLEAMGVDYIDESEVLTPADEEYHLRKDQFTVPFVCGCRNLGEAARRIGEGAAMLRTKGEPGTGNIVEAVRHMRKVNSEVSRLVVMNDDEIMTYAKELGAPYEVLKQIKDHGRLPVVNFAAGGVATPQDAALMMELGADGVFVGSGIFKSEDPEKFAKAIVQATTHYQDYELIGKLASELGTAMKGLDINQISLEERMQERGW.

Position 25 (Asp25) interacts with D-ribose 5-phosphate. Lys82 (schiff-base intermediate with D-ribose 5-phosphate) is an active-site residue. Gly154 is a D-ribose 5-phosphate binding site. Arg166 contributes to the D-glyceraldehyde 3-phosphate binding site. Residues Gly215 and 236–237 each bind D-ribose 5-phosphate; that span reads GS.

It belongs to the PdxS/SNZ family. As to quaternary structure, in the presence of PdxT, forms a dodecamer of heterodimers.

The catalysed reaction is aldehydo-D-ribose 5-phosphate + D-glyceraldehyde 3-phosphate + L-glutamine = pyridoxal 5'-phosphate + L-glutamate + phosphate + 3 H2O + H(+). It functions in the pathway cofactor biosynthesis; pyridoxal 5'-phosphate biosynthesis. Its function is as follows. Catalyzes the formation of pyridoxal 5'-phosphate from ribose 5-phosphate (RBP), glyceraldehyde 3-phosphate (G3P) and ammonia. The ammonia is provided by the PdxT subunit. Can also use ribulose 5-phosphate and dihydroxyacetone phosphate as substrates, resulting from enzyme-catalyzed isomerization of RBP and G3P, respectively. This Staphylococcus haemolyticus (strain JCSC1435) protein is Pyridoxal 5'-phosphate synthase subunit PdxS.